A 315-amino-acid chain; its full sequence is tRNA dimethylallyltransferase (315 aa).

14–21 (GPTASGKT) contributes to the ATP binding site. 16 to 21 (TASGKT) is a binding site for substrate. Interaction with substrate tRNA regions lie at residues 39–42 (DSAL), 163–167 (QRIQR), and 248–253 (RCVGYR).

The protein belongs to the IPP transferase family. Monomer. Requires Mg(2+) as cofactor.

The catalysed reaction is adenosine(37) in tRNA + dimethylallyl diphosphate = N(6)-dimethylallyladenosine(37) in tRNA + diphosphate. Its function is as follows. Catalyzes the transfer of a dimethylallyl group onto the adenine at position 37 in tRNAs that read codons beginning with uridine, leading to the formation of N6-(dimethylallyl)adenosine (i(6)A). The sequence is that of tRNA dimethylallyltransferase from Paraburkholderia xenovorans (strain LB400).